The sequence spans 131 residues: MKIALIAHDKKKDDMVSFAYAYKPIFEQHELFATGTTGLRIMEATGLVVTRYQSGPLGGDQEIGAMIAKNDLDMVIFFRDPLTAQPHEPDVNALLRLCDVYAIPLATNMASAEMLMHALERGDLDYRKLRK.

Positions 1–131 (MKIALIAHDK…GDLDYRKLRK (131 aa)) constitute an MGS-like domain. Substrate is bound by residues His8, Lys12, 34–37 (TGTT), and 54–55 (SG). Asp60 (proton donor/acceptor) is an active-site residue. His87 is a substrate binding site.

The protein belongs to the methylglyoxal synthase family.

It catalyses the reaction dihydroxyacetone phosphate = methylglyoxal + phosphate. In terms of biological role, catalyzes the formation of methylglyoxal from dihydroxyacetone phosphate. This Bacillus cereus (strain AH820) protein is Methylglyoxal synthase.